We begin with the raw amino-acid sequence, 105 residues long: Cell division protein FtsL (105 aa).

At 1-22 (MIGNERHGLVGVIGADLIRNAK) the chain is on the cytoplasmic side. A helical transmembrane segment spans residues 23 to 43 (IPLILLVAVLISAVLVVTTAH). Topologically, residues 44-105 (RTRLLTAERE…DPSQENIVIK (62 aa)) are periplasmic.

It belongs to the FtsL family. As to quaternary structure, part of a complex composed of FtsB, FtsL and FtsQ.

It localises to the cell inner membrane. In terms of biological role, essential cell division protein. May link together the upstream cell division proteins, which are predominantly cytoplasmic, with the downstream cell division proteins, which are predominantly periplasmic. This chain is Cell division protein FtsL, found in Yersinia pestis.